The sequence spans 552 residues: Terpene synthase 5 (552 aa).

Mg(2+) contacts are provided by aspartate 307, aspartate 311, and glutamate 457. The DDXXD motif signature appears at aspartate 307 to aspartate 311.

Belongs to the terpene synthase family. It depends on Mg(2+) as a cofactor.

In terms of biological role, catalyzes the cyclization of farnesyl diphosphate to multiple sesquiterpenes, such as olefins and sesquiterpene alcohols. The sequence is that of Terpene synthase 5 (TPS5) from Ricinus communis (Castor bean).